Here is a 403-residue protein sequence, read N- to C-terminus: Soluble calcium-activated nucleotidase 1 (403 aa).

Topologically, residues 1–44 (MPIQPFDQREWNEPMHSLRISVGGLPVLASMTKATDPRFRPRWR) are cytoplasmic. The chain crosses the membrane as a helical; Signal-anchor for type II membrane protein span at residues 45-61 (VILTSFVGAALLWLLYS). The Lumenal segment spans residues 62–403 (HHQGPVPGRP…TVKYEGIEFI (342 aa)). Asparagine 90 is a glycosylation site (N-linked (GlcNAc...) asparagine). Positions 170, 171, 217, 286, 347, and 398 each coordinate Ca(2+).

Belongs to the apyrase family. In terms of assembly, monomer. Homodimer; dimerization is Ca(2+)-dependent. Ca(2+) serves as cofactor.

Its subcellular location is the endoplasmic reticulum membrane. It is found in the golgi apparatus. The protein localises to the golgi stack membrane. It catalyses the reaction a ribonucleoside 5'-diphosphate + H2O = a ribonucleoside 5'-phosphate + phosphate + H(+). Its function is as follows. Calcium-dependent nucleotidase with a preference for UDP. The order of activity with different substrates is UDP &gt; GDP &gt; IDP &gt;&gt; UTP &gt; CDP = GTP = ITP. Has very low activity towards ADP and even lower activity towards ATP. Does not hydrolyze AMP and GMP. Involved in proteoglycan synthesis. The polypeptide is Soluble calcium-activated nucleotidase 1 (Cant1) (Mus musculus (Mouse)).